A 331-amino-acid polypeptide reads, in one-letter code: Ferredoxin--NADP reductase (331 aa).

Positions 14, 33, 41, 46, 86, 120, 284, and 327 each coordinate FAD.

This sequence belongs to the ferredoxin--NADP reductase type 2 family. As to quaternary structure, homodimer. Requires FAD as cofactor.

The enzyme catalyses 2 reduced [2Fe-2S]-[ferredoxin] + NADP(+) + H(+) = 2 oxidized [2Fe-2S]-[ferredoxin] + NADPH. This chain is Ferredoxin--NADP reductase, found in Picrophilus torridus (strain ATCC 700027 / DSM 9790 / JCM 10055 / NBRC 100828 / KAW 2/3).